A 286-amino-acid polypeptide reads, in one-letter code: Energy-coupling factor transporter ATP-binding protein EcfA2 (286 aa).

In terms of domain architecture, ABC transporter spans 3–246 (IRFDNVSYTY…KEKLADWHIG (244 aa)). Residue 40 to 47 (GQTGSGKS) participates in ATP binding.

Belongs to the ABC transporter superfamily. Energy-coupling factor EcfA family. Forms a stable energy-coupling factor (ECF) transporter complex composed of 2 membrane-embedded substrate-binding proteins (S component), 2 ATP-binding proteins (A component) and 2 transmembrane proteins (T component).

It localises to the cell membrane. In terms of biological role, ATP-binding (A) component of a common energy-coupling factor (ECF) ABC-transporter complex. Unlike classic ABC transporters this ECF transporter provides the energy necessary to transport a number of different substrates. This Staphylococcus aureus (strain MRSA252) protein is Energy-coupling factor transporter ATP-binding protein EcfA2.